Reading from the N-terminus, the 186-residue chain is Ribosome-recycling factor (186 aa).

Belongs to the RRF family.

Its subcellular location is the cytoplasm. In terms of biological role, responsible for the release of ribosomes from messenger RNA at the termination of protein biosynthesis. May increase the efficiency of translation by recycling ribosomes from one round of translation to another. The sequence is that of Ribosome-recycling factor from Nitratiruptor sp. (strain SB155-2).